The following is a 183-amino-acid chain: uncharacterized protein (183 aa).

This sequence belongs to the chlamydial CPn_0803/CT_584/TC_0873 family.

This is an uncharacterized protein from Chlamydia muridarum (strain MoPn / Nigg).